The primary structure comprises 163 residues: Cyclic pyranopterin monophosphate synthase (163 aa).

Substrate is bound by residues 75-77 and 113-114; these read LCH and ME. Asp128 is a catalytic residue.

This sequence belongs to the MoaC family. Homohexamer; trimer of dimers.

It catalyses the reaction (8S)-3',8-cyclo-7,8-dihydroguanosine 5'-triphosphate = cyclic pyranopterin phosphate + diphosphate. The protein operates within cofactor biosynthesis; molybdopterin biosynthesis. Functionally, catalyzes the conversion of (8S)-3',8-cyclo-7,8-dihydroguanosine 5'-triphosphate to cyclic pyranopterin monophosphate (cPMP). In Magnetococcus marinus (strain ATCC BAA-1437 / JCM 17883 / MC-1), this protein is Cyclic pyranopterin monophosphate synthase.